Consider the following 191-residue polypeptide: Putative acetyltransferase DDB_G0280825 (191 aa).

Belongs to the transferase hexapeptide repeat family.

In Dictyostelium discoideum (Social amoeba), this protein is Putative acetyltransferase DDB_G0280825.